Reading from the N-terminus, the 2517-residue chain is Serine/threonine-protein kinase ATR (2517 aa).

Residues Glu-1178–Asp-1214 form an HEAT repeat. In terms of domain architecture, FAT spans Leu-1509–Ser-2066. Residue Ser-1569 is modified to Phosphoserine. Residue Tyr-1570 is modified to Phosphotyrosine. The residue at position 1573 (Ser-1573) is a Phosphoserine. The residue at position 1575 (Thr-1575) is a Phosphothreonine. The region spanning Phe-2184–Ser-2508 is the PI3K/PI4K catalytic domain. The segment at Ile-2190–Lys-2196 is G-loop. The segment at Gly-2360 to Asn-2368 is catalytic loop. An activation loop region spans residues His-2380 to Thr-2404. Residues Ile-2485–Leu-2517 enclose the FATC domain.

This sequence belongs to the PI3/PI4-kinase family. ATM subfamily. Interacts with mus304. It depends on Mn(2+) as a cofactor.

The protein resides in the nucleus. It catalyses the reaction L-seryl-[protein] + ATP = O-phospho-L-seryl-[protein] + ADP + H(+). It carries out the reaction L-threonyl-[protein] + ATP = O-phospho-L-threonyl-[protein] + ADP + H(+). In terms of biological role, serine/threonine protein kinase which activates checkpoint signaling upon genotoxic stresses such as ionizing radiation (IR), ultraviolet light (UV), or DNA replication stalling, thereby acting as a DNA damage sensor. Recognizes the substrate consensus sequence [ST]-Q. Phosphorylates various proteins, which collectively inhibits DNA replication and mitosis and promotes DNA repair and recombination. Phosphorylates grp/CHK1. Phosphorylates 'Ser-137' of histone variant H2AX/H2AV at sites of DNA damage, thereby regulating DNA damage response mechanism. Essential for the DNA damage checkpoint in larval imaginal disks and neuroblasts and for the DNA replication checkpoint in the embryo. Also has an essential role during early nuclear divisions in embryos, where it is required to delay mitosis in response to incomplete DNA replication. Also plays an important role during meiosis, where it may monitor double-strand-break repair during meiotic crossing over, to regulate the progression of prophase I, and to enforce metaphase I delay observed at the end of oogenesis. Involved in telomere maintenance and prevention of telomere fusion; potentially functioning downstream of moi/modigliani. The chain is Serine/threonine-protein kinase ATR (mei-41) from Drosophila melanogaster (Fruit fly).